Reading from the N-terminus, the 2431-residue chain is Nucleoprotein TPR (2431 aa).

The tract at residues 1-48 (MTSGGSASRSGHRGVPMTSRGFDGSRRGSLRRAGARETASEAADGAAP) is disordered. Positions 77–87 (AVLQQVLERPE) are sufficient for interaction with TPR. A necessary for interaction with HSF1 region spans residues 88–191 (LNKLPKSTQN…GIQSQFTRAK (104 aa)). Residues 98–444 (KLEKFLAEQQ…SATKRKGAIL (347 aa)) adopt a coiled-coil conformation. 3 positions are modified to N6-acetyllysine: K326, K386, and K419. Position 453 is a phosphoserine (S453). The stretch at 486–678 (EKQENKRINK…ESRQHQMQLV (193 aa)) forms a coiled coil. K502, K531, and K551 each carry N6-acetyllysine. The necessary for association to the NPC stretch occupies residues 511–587 (LKRQREEYER…LMELEEARGN (77 aa)). Phosphoserine is present on residues S596, S597, and S706. Residues 736 to 1246 (STEAIEAKAA…IEKLSDKVVT (511 aa)) are a coiled coil. N6-acetyllysine is present on residues K787, K797, K822, and K829. Over residues 989 to 998 (LASQSTQRTG) the composition is skewed to polar residues. A disordered region spans residues 989 to 1011 (LASQSTQRTGKGQPGDRDDVDDL). The segment covering 1002-1011 (PGDRDDVDDL) has biased composition (basic and acidic residues). Phosphoserine is present on S1259. Coiled coils occupy residues 1289–1494 (EVAQ…LDAK) and 1547–1700 (VQEM…QRDE). The interval 1292-1394 (QVESLRYRQR…NAELSEKSGM (103 aa)) is necessary for interaction with HSF1. Residues 1689–1701 (EHQERHLEQRDEP) show a composition bias toward basic and acidic residues. The tract at residues 1689–1744 (EHQERHLEQRDEPQEPTNKAPEQQRQITLKTTPASGERGIASTSDPPTANIKPTPV) is disordered. Residues 1703-1722 (EPTNKAPEQQRQITLKTTPA) show a composition bias toward polar residues. Residue K1760 is modified to N6-acetyllysine. T1762 bears the Phosphothreonine mark. Polar residues predominate over residues 1873-1898 (SSPVERPSTSTAVFGTVSATPSSSLP). The tract at residues 1873 to 2193 (SSPVERPSTS…TPGIGGMQQH (321 aa)) is disordered. The tract at residues 1882–1937 (STAVFGTVSATPSSSLPKRTREEEEDSTMEAGDQVSEDTVEMPLPKKLKMVTPVGT) is sufficient and essential for mediating its nuclear import. Positions 1937 to 1951 (TEEEVMAEESTDGEA) are enriched in acidic residues. Residues 1954–1963 (QAYNQDSQDS) show a composition bias toward polar residues. The residue at position 1963 (S1963) is a Phosphoserine. Positions 1994–2005 (QSDQQTTSSQDG) are enriched in low complexity. Composition is skewed to acidic residues over residues 2016–2057 (DSDD…EDSN) and 2067–2088 (DGYEADDAEGGDGTDPGTETEE). The segment covering 2100-2132 (ADSQNSGEGNTSAAESSFSQEVAREQQPTSASE) has biased composition (polar residues). A phosphoserine mark is found at S2102, S2105, S2116, S2118, and S2141. Residues R2174 and R2179 each carry the omega-N-methylarginine modification. Phosphothreonine occurs at positions 2184 and 2205. S2223 is subject to Phosphoserine. Omega-N-methylarginine is present on R2231. Residues 2295–2312 (ESTTSDASEHASQSVPMV) are compositionally biased toward polar residues. Residues 2295–2431 (ESTTSDASEH…RGGINRGNIN (137 aa)) are disordered. The segment covering 2313-2325 (TTSTGTLSTTNET) has biased composition (low complexity). A compositionally biased stretch (acidic residues) spans 2327 to 2340 (AGDDGDEVFVEAES). The segment covering 2341–2351 (EGISSEAGLEI) has biased composition (low complexity). Residues 2353–2367 (SQQEEEPVQASDESD) show a composition bias toward acidic residues. Residues 2368-2388 (LPSTSQDPPSSSSVDTSSSQP) are compositionally biased toward low complexity. Asymmetric dimethylarginine is present on residues R2411, R2413, and R2422. Residues 2420–2431 (GGRGGINRGNIN) are compositionally biased toward gly residues.

It belongs to the TPR family. Homodimer. Part of the nuclear pore complex (NPC). Associates with the XPO1/CRM1-mediated nuclear export complex, the Importin alpha/Importin beta receptor and the dynein 1 complex. Interacts (via C-terminal domain) with the KPNB1; the interaction occurs in a RanGTP-dependent manner. Interacts (via C-terminal region and phosphorylated form) with MAPK1/ERK2 (via phosphorylated form); the interaction requires dimerization of MAPK1/ERK2 and increases following EGF stimulation. Interacts with MAPK3/ERK1; the interaction increases following EGF stimulation. Interacts (via coiled coil region) with NUP153; the interaction is direct. Interacts with HSF1; the interaction increases in a stress-responsive manner and stimulates export of stress-induced HSP70 mRNA. Interacts with huntingtin/HTT; the interaction is inhibited by aggregated huntingtin/HTT forms with expanded polyglutamine stretch. Interacts with MAD1L1 (via N-terminal region), MAD2L1, and TTK; the interactions occurs in a microtubule-independent manner. Interacts (via middle region) with DYNLL1. Interacts with DCTN1, dynein, NUP153 and tubulin. Interacts with MTA1. Interacts with IFI204 (via C-terminal region). Interacts with IFI203. Interacts with ZC3HC1; this interaction mediates ZC3HC1 nuclear envelopes (NE)-association but also required for proper positioning of a substantial amount of TPR at the nuclear basket (NB). In terms of processing, phosphorylated. Phosphorylation occurs on serine and threonine residues (comprised in the C-terminal region) by MAPK1/ERK2 and stabilizes the interaction between these two proteins. Expressed in the heart, liver, kidney, spleen, lung and skeletal muscles.

Its subcellular location is the nucleus. It localises to the nucleus membrane. It is found in the nucleus envelope. The protein localises to the nuclear pore complex. The protein resides in the cytoplasm. Its subcellular location is the cytoskeleton. It localises to the spindle. It is found in the chromosome. The protein localises to the centromere. The protein resides in the kinetochore. Its function is as follows. Component of the nuclear pore complex (NPC), a complex required for the trafficking across the nuclear envelope. Functions as a scaffolding element in the nuclear phase of the NPC essential for normal nucleocytoplasmic transport of proteins and mRNAs, plays a role in the establishment of nuclear-peripheral chromatin compartmentalization in interphase, and in the mitotic spindle checkpoint signaling during mitosis. Involved in the quality control and retention of unspliced mRNAs in the nucleus; in association with NUP153, regulates the nuclear export of unspliced mRNA species bearing constitutive transport element (CTE) in a NXF1- and KHDRBS1-independent manner. Negatively regulates both the association of CTE-containing mRNA with large polyribosomes and translation initiation. Does not play any role in Rev response element (RRE)-mediated export of unspliced mRNAs. Implicated in nuclear export of mRNAs transcribed from heat shock gene promoters; associates both with chromatin in the HSP70 promoter and with mRNAs transcribed from this promoter under stress-induced conditions. Plays a limited role in the regulation of nuclear protein export. Modulates the nucleocytoplasmic transport of activated MAPK1/ERK2 and huntingtin/HTT and may serve as a docking site for the XPO1/CRM1-mediated nuclear export complex. Also plays a role as a structural and functional element of the perinuclear chromatin distribution; involved in the formation and/or maintenance of NPC-associated perinuclear heterochromatin exclusion zones (HEZs). Finally, acts as a spatial regulator of the spindle-assembly checkpoint (SAC) response ensuring a timely and effective recruitment of spindle checkpoint proteins like MAD1L1 and MAD2L1 to unattached kinetochore during the metaphase-anaphase transition before chromosome congression. Its N-terminus is involved in activation of oncogenic kinases. In Mus musculus (Mouse), this protein is Nucleoprotein TPR.